We begin with the raw amino-acid sequence, 141 residues long: Large ribosomal subunit protein uL11 (141 aa).

It belongs to the universal ribosomal protein uL11 family. In terms of assembly, part of the ribosomal stalk of the 50S ribosomal subunit. Interacts with L10 and the large rRNA to form the base of the stalk. L10 forms an elongated spine to which L12 dimers bind in a sequential fashion forming a multimeric L10(L12)X complex. In terms of processing, one or more lysine residues are methylated.

Forms part of the ribosomal stalk which helps the ribosome interact with GTP-bound translation factors. This Streptococcus equi subsp. equi (strain 4047) protein is Large ribosomal subunit protein uL11.